The primary structure comprises 190 residues: Peptidyl-tRNA hydrolase (190 aa).

Phenylalanine 14 provides a ligand contact to tRNA. Histidine 19 functions as the Proton acceptor in the catalytic mechanism. Positions 64, 66, and 112 each coordinate tRNA.

The protein belongs to the PTH family. As to quaternary structure, monomer.

The protein localises to the cytoplasm. It carries out the reaction an N-acyl-L-alpha-aminoacyl-tRNA + H2O = an N-acyl-L-amino acid + a tRNA + H(+). Hydrolyzes ribosome-free peptidyl-tRNAs (with 1 or more amino acids incorporated), which drop off the ribosome during protein synthesis, or as a result of ribosome stalling. In terms of biological role, catalyzes the release of premature peptidyl moieties from peptidyl-tRNA molecules trapped in stalled 50S ribosomal subunits, and thus maintains levels of free tRNAs and 50S ribosomes. The polypeptide is Peptidyl-tRNA hydrolase (Staphylococcus aureus (strain bovine RF122 / ET3-1)).